A 225-amino-acid chain; its full sequence is Putative elongation factor 1 gamma homolog (225 aa).

The GST C-terminal domain occupies 94–225; that stretch reads DFKTRADILR…MCETEMQPIK (132 aa).

The sequence is that of Putative elongation factor 1 gamma homolog from Saccharomyces cerevisiae (strain ATCC 204508 / S288c) (Baker's yeast).